The primary structure comprises 81 residues: Costars family protein ABRACL (81 aa).

The protein belongs to the costars family.

The sequence is that of Costars family protein ABRACL from Coturnix coturnix (Common quail).